We begin with the raw amino-acid sequence, 112 residues long: NADH-quinone oxidoreductase subunit K (112 aa).

Transmembrane regions (helical) follow at residues 14–34 (LEGY…GALI), 39–59 (VVVF…LVAF), and 76–96 (LIIA…LAIF).

The protein belongs to the complex I subunit 4L family. NDH-1 is composed of 14 different subunits. Subunits NuoA, H, J, K, L, M, N constitute the membrane sector of the complex.

The protein localises to the cell membrane. It catalyses the reaction a quinone + NADH + 5 H(+)(in) = a quinol + NAD(+) + 4 H(+)(out). Functionally, NDH-1 shuttles electrons from NADH, via FMN and iron-sulfur (Fe-S) centers, to quinones in the respiratory chain. The immediate electron acceptor for the enzyme in this species is believed to be a menaquinone. Couples the redox reaction to proton translocation (for every two electrons transferred, four hydrogen ions are translocated across the cytoplasmic membrane), and thus conserves the redox energy in a proton gradient. This is NADH-quinone oxidoreductase subunit K from Rubrobacter xylanophilus (strain DSM 9941 / JCM 11954 / NBRC 16129 / PRD-1).